A 369-amino-acid chain; its full sequence is GTPase Obg (369 aa).

The 159-residue stretch at 1–159 folds into the Obg domain; sequence MKFVDEVTID…KNLKLELRVL (159 aa). The 175-residue stretch at 160–334 folds into the OBG-type G domain; sequence ADVGLLGMPN…LIHAIYSHVA (175 aa). GTP-binding positions include 166-173, 191-195, 213-216, 284-287, and 315-317; these read GMPNAGKS, FTTLH, DIPG, NKLD, and SAL. Mg(2+) contacts are provided by serine 173 and threonine 193. Positions 339–369 are disordered; sequence QPEEVPDPRFTTNEDLSEAAPAPDRDDPRFR.

The protein belongs to the TRAFAC class OBG-HflX-like GTPase superfamily. OBG GTPase family. Monomer. Mg(2+) serves as cofactor.

Its subcellular location is the cytoplasm. Its function is as follows. An essential GTPase which binds GTP, GDP and possibly (p)ppGpp with moderate affinity, with high nucleotide exchange rates and a fairly low GTP hydrolysis rate. Plays a role in control of the cell cycle, stress response, ribosome biogenesis and in those bacteria that undergo differentiation, in morphogenesis control. This chain is GTPase Obg, found in Leptothrix cholodnii (strain ATCC 51168 / LMG 8142 / SP-6) (Leptothrix discophora (strain SP-6)).